The chain runs to 210 residues: Large ribosomal subunit protein uL5 (210 aa).

The interval Ala-188–Lys-210 is disordered. Basic residues predominate over residues Ala-195 to Lys-210.

It belongs to the universal ribosomal protein uL5 family. Part of the 50S ribosomal subunit; part of the 5S rRNA/L5/L18/L25 subcomplex. Contacts the 5S rRNA and the P site tRNA. Forms a bridge to the 30S subunit in the 70S ribosome.

Functionally, this is one of the proteins that bind and probably mediate the attachment of the 5S RNA into the large ribosomal subunit, where it forms part of the central protuberance. In the 70S ribosome it contacts protein S13 of the 30S subunit (bridge B1b), connecting the 2 subunits; this bridge is implicated in subunit movement. Contacts the P site tRNA; the 5S rRNA and some of its associated proteins might help stabilize positioning of ribosome-bound tRNAs. This is Large ribosomal subunit protein uL5 from Cutibacterium acnes (strain DSM 16379 / KPA171202) (Propionibacterium acnes).